The following is a 448-amino-acid chain: D-inositol 3-phosphate glycosyltransferase (448 aa).

The interval 1–21 is disordered; it reads MAEQHTGVGRQRGARPWPRPR. H29 provides a ligand contact to 1D-myo-inositol 3-phosphate. Residues 35–36 and G43 contribute to the UDP-N-acetyl-alpha-D-glucosamine site; that span reads QP. 1D-myo-inositol 3-phosphate contacts are provided by residues 40–45, K98, Y131, T155, and R175; that span reads DAGGMN. R255, K260, and Q321 together coordinate UDP-N-acetyl-alpha-D-glucosamine. 3 residues coordinate Mg(2+): Y330, R331, and A333. Positions 343 and 351 each coordinate UDP-N-acetyl-alpha-D-glucosamine. T357 is a Mg(2+) binding site.

This sequence belongs to the glycosyltransferase group 1 family. MshA subfamily. Homodimer.

It carries out the reaction 1D-myo-inositol 3-phosphate + UDP-N-acetyl-alpha-D-glucosamine = 1D-myo-inositol 2-acetamido-2-deoxy-alpha-D-glucopyranoside 3-phosphate + UDP + H(+). Catalyzes the transfer of a N-acetyl-glucosamine moiety to 1D-myo-inositol 3-phosphate to produce 1D-myo-inositol 2-acetamido-2-deoxy-glucopyranoside 3-phosphate in the mycothiol biosynthesis pathway. The protein is D-inositol 3-phosphate glycosyltransferase of Salinispora arenicola (strain CNS-205).